Here is a 629-residue protein sequence, read N- to C-terminus: Plastin-1 (629 aa).

Residue Met1 is modified to N-acetylmethionine. 2 consecutive EF-hand domains span residues 11-46 (EELE…ASLP) and 51-86 (KVRE…LKSK). Asp24, Asp26, Ser28, Tyr30, Glu35, Asp64, Asn66, Asp68, Lys70, and Glu75 together coordinate Ca(2+). 2 actin-binding regions span residues 108–380 (TSTI…CLHK) and 381–625 (PNNN…GKGL). Calponin-homology (CH) domains lie at 122 to 238 (EEEK…KVGL), 266 to 376 (LSPE…NTYP), 395 to 504 (SKEE…RRYT), and 516 to 625 (KVND…GKGL).

Monomer. Phosphorylated. As to expression, in small intestine, colon, and kidney; relatively lower levels of expression are detected in the lung and stomach.

Its subcellular location is the cytoplasm. The protein localises to the cell projection. It is found in the stereocilium. In terms of biological role, actin-bundling protein. In the inner ear, it is required for stereocilia formation. Mediates liquid packing of actin filaments that is necessary for stereocilia to grow to their proper dimensions. The chain is Plastin-1 (PLS1) from Homo sapiens (Human).